Consider the following 211-residue polypeptide: Degradation in the endoplasmic reticulum protein 1 (211 aa).

N-acetylmethionine is present on methionine 1. Residues 1 to 14 (MDAVILNLLGDIPL) are Cytoplasmic-facing. Residues 15–32 (VTRLWTIGCLVLSGLTSL) form a helical membrane-spanning segment. The Lumenal portion of the chain corresponds to 33 to 67 (RIVDPGKVVYSYDLVFKKGQYGRLLYSIFDYGAFN). Residues 68-85 (WISMINIFVSANHLSTLE) traverse the membrane as a helical segment. Residues 86 to 92 (NSFNLRR) lie on the Cytoplasmic side of the membrane. A helical membrane pass occupies residues 93–109 (KFCWIIFLLLVILVKMT). Topologically, residues 110–117 (SIEQPAAS) are lumenal. The chain crosses the membrane as a helical span at residues 118-133 (LGVLLHENLVYYELKK). The Cytoplasmic portion of the chain corresponds to 134–149 (NGNQMNVRFFGAIDVS). Residues 150–165 (PSIFPIYMNAVMYFVY) traverse the membrane as a helical segment. The Lumenal segment spans residues 166–168 (KRS). Residues 169-189 (WLEIAMNFMPGHVIYYMDDII) form a helical membrane-spanning segment. Topologically, residues 190–211 (GKIYGIDLCKSPYDWFRNTETP) are cytoplasmic.

It belongs to the derlin family. Component of the HRD1 ubiquitin ligase complex which contains the E3 ligase HRD1, its cofactors HRD3, USA1 and DER1, substrate recruiting factor YOS9 and CDC48-binding protein UBX2. Within the complex, interacts with USA1 (via C-terminus). In ERAD-L, HRD3 and YOS9 jointly bind misfolded glycoproteins in the endoplasmic reticulum (ER) lumen. Movement of ERAD-L substrates through the ER membrane is facilitated by HRD1 and DER1 which have lateral gates facing each other and which distort the membrane region between the lateral gates, making it much thinner than a normal phospholipid bilayer. Substrates insert into the membrane as a hairpin loop with one strand interacting with DER1 and the other with HRD1. The HRD1 complex interacts with the heterotrimeric CDC48-NPL4-UFD1 ATPase complex which is recruited by UBX2 via its interaction with CDC48 and which moves ubiquitinated substrates to the cytosol for targeting to the proteasome. In terms of processing, N-terminally acetylated by acetyltransferase NatB which enhances DER1 stability and is required for ERAD-L function.

Its subcellular location is the endoplasmic reticulum membrane. Functionally, component of the endoplasmic reticulum-associated degradation (ERAD) pathway. Specifically required for the ERAD-L pathway which mediates the degradation of proteins with misfolded lumenal domains within the endoplasmic reticulum (ER). Facilitates retrotranslocation of misfolded proteins from the ER lumen through the ER membrane in conjunction with HRD1. Both proteins have lateral gates facing each other and distort the membrane region between the lateral gates, making it much thinner than a normal phospholipid bilayer. Substrates insert into the membrane as a hairpin loop with one strand interacting with DER1 and the other with HRD1. The polypeptide is Degradation in the endoplasmic reticulum protein 1 (DER1) (Saccharomyces cerevisiae (strain ATCC 204508 / S288c) (Baker's yeast)).